Consider the following 402-residue polypeptide: LIM homeobox transcription factor 1-beta (402 aa).

LIM zinc-binding domains are found at residues 56-106 (CEGC…CKQD) and 115-168 (CSGC…CKGD). Disordered regions lie at residues 176–229 (LSSV…LTTQ) and 326–346 (PYGS…PGDH). Positions 219 to 278 (PKRPRTILTTQQRRAFKASFEVSSKPCRKVRETLAAETGLSVRVVQVWFQNQRAKMKKLA) form a DNA-binding region, homeobox. Residues 326 to 338 (PYGSSDPFQQGLT) show a composition bias toward polar residues.

As to quaternary structure, interacts with DHX9. Expressed in most tissues. Highest levels in testis, thyroid, duodenum, skeletal muscle, and pancreatic islets.

It localises to the nucleus. Transcription factor involved in the regulation of podocyte-expressed genes. Essential for the specification of dorsal limb fate at both the zeugopodal and autopodal levels. This is LIM homeobox transcription factor 1-beta (LMX1B) from Homo sapiens (Human).